We begin with the raw amino-acid sequence, 1410 residues long: Non-secreted LysM effector LysM15 (1410 aa).

2 consecutive LysM domains span residues 1179–1225 (TTYT…DICM) and 1231–1277 (TQYT…EILG). Over residues 1291 to 1303 (TTGDGITTTPGNG) the composition is skewed to low complexity. A disordered region spans residues 1291-1317 (TTGDGITTTPGNGEYAQGVVSPPENST). Positions 1328–1375 (RWYSATADDLCVQICLKSGVSAKLFKAANPSLAADCDNSLIAGDAYCV) constitute a LysM 3 domain.

The protein belongs to the secreted LysM effector family.

In terms of biological role, non-secreted LysM effector that might be involved in manipulation of host defenses for successful infection. This Penicillium expansum (Blue mold rot fungus) protein is Non-secreted LysM effector LysM15.